The sequence spans 236 residues: Carboxymethylenebutenolidase (236 aa).

Active-site residues include C123, D171, and H202.

Belongs to the dienelactone hydrolase family. As to quaternary structure, monomer.

The catalysed reaction is 2-(5-oxo-2,5-dihydrofuran-2-ylidene)acetate + H2O = 4-oxohex-2-enedioate + H(+). It participates in aromatic compound metabolism; 3-chlorocatechol degradation. Functionally, ring cleavage of cyclic ester dienelactone to produce maleylacetate. In Pseudomonas knackmussii (strain DSM 6978 / CCUG 54928 / LMG 23759 / B13), this protein is Carboxymethylenebutenolidase (clcD).